Reading from the N-terminus, the 784-residue chain is MEGAMAVRVTAAHTAEAQAEAGREAGEGAVAAVAAALAPSGFLGLPAPFSEEDEDDVHRCGRCQAEFTALEDFVQHKIQKACQRAPPEALPATPATTALLGQEVVPAAPGPEEPITVAHIVVEAASLAADISHASDLVGGGHIKEVIVAAEAELGDGEMAEAPGSPRQQGLGLAGEGEQAQVKLLVNKDGRYVCALCHKTFKTGSILKAHMVTHSSRKDHECKLCGASFRTKGSLIRHHRRHTDERPYKCSKCGKSFRESGALTRHLKSLTPCTEKIRFSVSKDVVVSKEDARAGSGAGAAGLGTATSSVTGEPIETSPVIHLVTDAKGTVIHEVHVQMQELSLGMKALAPEPPVSQELPCSSEGSRENLLHQAMQNSGIVLERAAGEEGALEPAPAAGSSPQPLAVAAPQLPVLEVQPLETQVASEASAVPRTHPCPQCSETFPTAATLEAHKRGHTGPRPFACAQCGKAFPKAYLLKKHQEVHVRERRFRCGDCGKLYKTIAHVRGHRRVHSDERPYPCPKCGKRYKTKNAQQVHFRTHLEEKPHVCQFCSRGFREKGSLVRHVRHHTGEKPFKCYKCGRGFAEHGTLNRHLRTKGGCLLEVEELLVSEDSPAAATTVLTEDPHTVLVEFSSVVADTQEYIIEATADDAETSEATEIIEGTQTEVDSHIMKVVQQIVHQASAGHQIIVQNVTMDEETALGPEAAAADTITIATPESLTEQVAMTLASAISEGTVLAARAGTSGTEQATVTMVSSEDIEILEHAGELVIASPEGQLEVQTVIV.

The interval 41–85 (GFLGLPAPFSEEDEDDVHRCGRCQAEFTALEDFVQHKIQKACQRA) is required for ubiquitin ligase activity. Position 50 is a phosphoserine (Ser-50). Positions 184–263 (LLVNKDGRYV…GKSFRESGAL (80 aa)) are mediates dimerization, DNA-binding, transcription repression of CCNA2 and interaction with HMGA2. 2 C2H2-type zinc fingers span residues 192–214 (YVCA…MVTH) and 220–242 (HECK…HRRH). The segment at 248–272 (YKCSKCGKSFRESGALTRHLKSLTP) adopts a C2H2-type 3; degenerate zinc-finger fold. Residues 369–566 (NLLHQAMQNS…REKGSLVRHV (198 aa)) are mediates interaction with CDKN2A. C2H2-type zinc fingers lie at residues 435–457 (HPCP…KRGH), 463–485 (FACA…QEVH), 491–513 (FRCG…RRVH), 519–541 (YPCP…FRTH), and 547–569 (HVCQ…VRHH). Residues 435-599 (HPCPQCSETF…LNRHLRTKGG (165 aa)) are interaction with BMI1. The mediates interaction with TP53 stretch occupies residues 521–580 (CPKCGKRYKTKNAQQVHFRTHLEEKPHVCQFCSRGFREKGSLVRHVRHHTGEKPFKCYKC). Residues 575 to 597 (FKCYKCGRGFAEHGTLNRHLRTK) form a C2H2-type 9; degenerate zinc finger. The tract at residues 575–597 (FKCYKCGRGFAEHGTLNRHLRTK) is mediates interaction with RASSF1.

As to quaternary structure, homodimer; binds DNA as a dimer. Forms a complex with CDKN2A and TP53. Interactions with TP53, RB1, ANP32A, BMI1 and FHL2 regulate E4F1 activity. Interacts with HDAC1, HMGA2 and RASSF1. In terms of assembly, (Microbial infection) Interacts with HBV protein X. Post-translationally, proteolytic cleavage produces a 50 kDa N-terminal peptide (p50E4F) which has a DNA-binding activity and activates transcription in presence of the adenoviral E1A protein. The major full-length protein (p120E4F) functions as a repressor of transcription. In terms of processing, phosphorylated; p120E4F and p50E4F are both phosphorylated. Phosphorylation is cell cycle-dependent and differentially regulates DNA-binding activity and function of both forms. May be sumoylated by UBE2I upon interaction with CDKN2A. In terms of tissue distribution, ubiquitously expressed.

It is found in the nucleus. It localises to the nucleoplasm. The protein localises to the cytoplasm. The catalysed reaction is S-ubiquitinyl-[E2 ubiquitin-conjugating enzyme]-L-cysteine + [acceptor protein]-L-lysine = [E2 ubiquitin-conjugating enzyme]-L-cysteine + N(6)-ubiquitinyl-[acceptor protein]-L-lysine.. The protein operates within protein modification; protein ubiquitination. Its function is as follows. May function as a transcriptional repressor. May also function as a ubiquitin ligase mediating ubiquitination of chromatin-associated TP53. Functions in cell survival and proliferation through control of the cell cycle. Functions in the p53 and pRB tumor suppressor pathways and regulates the cyclin CCNA2 transcription. Functionally, identified as a cellular target of the adenoviral oncoprotein E1A, it is required for both transcriptional activation and repression of viral genes. The chain is Transcription factor E4F1 (E4F1) from Homo sapiens (Human).